The following is a 165-amino-acid chain: Ribonuclease H2 subunit C (165 aa).

An N-acetylmethionine modification is found at methionine 1.

Belongs to the RNase H2 subunit C family. In terms of assembly, the RNase H2 complex is a heterotrimer composed of the catalytic subunit RNASEH2A and the non-catalytic subunits RNASEH2B and RNASEH2C.

It localises to the nucleus. Non catalytic subunit of RNase H2, an endonuclease that specifically degrades the RNA of RNA:DNA hybrids. Participates in DNA replication, possibly by mediating the removal of lagging-strand Okazaki fragment RNA primers during DNA replication. Mediates the excision of single ribonucleotides from DNA:RNA duplexes. This is Ribonuclease H2 subunit C (RNASEH2C) from Bos taurus (Bovine).